A 438-amino-acid chain; its full sequence is 26S proteasome regulatory subunit 7 homolog (438 aa).

Positions 1 to 15 (MPPKEDWEKYQKPVD) are enriched in basic and acidic residues. Positions 1 to 31 (MPPKEDWEKYQKPVDTEEENDKNPPPLDEGD) are disordered. Ser90 is subject to Phosphoserine. ATP is bound at residue 220–227 (GPPGTGKT).

The protein belongs to the AAA ATPase family.

It is found in the cytoplasm. Its subcellular location is the nucleus. In terms of biological role, the 26S proteasome is involved in the ATP-dependent degradation of ubiquitinated proteins. The regulatory (or ATPase) complex confers ATP dependency and substrate specificity to the 26S complex. The protein is 26S proteasome regulatory subunit 7 homolog (rpt1) of Schizosaccharomyces pombe (strain 972 / ATCC 24843) (Fission yeast).